The primary structure comprises 200 residues: NADH-quinone oxidoreductase subunit C (200 aa).

Belongs to the complex I 30 kDa subunit family. In terms of assembly, NDH-1 is composed of 14 different subunits. Subunits NuoB, C, D, E, F, and G constitute the peripheral sector of the complex.

The protein resides in the cell inner membrane. It carries out the reaction a quinone + NADH + 5 H(+)(in) = a quinol + NAD(+) + 4 H(+)(out). In terms of biological role, NDH-1 shuttles electrons from NADH, via FMN and iron-sulfur (Fe-S) centers, to quinones in the respiratory chain. The immediate electron acceptor for the enzyme in this species is believed to be ubiquinone. Couples the redox reaction to proton translocation (for every two electrons transferred, four hydrogen ions are translocated across the cytoplasmic membrane), and thus conserves the redox energy in a proton gradient. This is NADH-quinone oxidoreductase subunit C from Burkholderia cenocepacia (strain HI2424).